Consider the following 177-residue polypeptide: ATP synthase subunit delta (177 aa).

It belongs to the ATPase delta chain family. F-type ATPases have 2 components, F(1) - the catalytic core - and F(0) - the membrane proton channel. F(1) has five subunits: alpha(3), beta(3), gamma(1), delta(1), epsilon(1). F(0) has three main subunits: a(1), b(2) and c(10-14). The alpha and beta chains form an alternating ring which encloses part of the gamma chain. F(1) is attached to F(0) by a central stalk formed by the gamma and epsilon chains, while a peripheral stalk is formed by the delta and b chains.

It is found in the cell inner membrane. F(1)F(0) ATP synthase produces ATP from ADP in the presence of a proton or sodium gradient. F-type ATPases consist of two structural domains, F(1) containing the extramembraneous catalytic core and F(0) containing the membrane proton channel, linked together by a central stalk and a peripheral stalk. During catalysis, ATP synthesis in the catalytic domain of F(1) is coupled via a rotary mechanism of the central stalk subunits to proton translocation. Its function is as follows. This protein is part of the stalk that links CF(0) to CF(1). It either transmits conformational changes from CF(0) to CF(1) or is implicated in proton conduction. This chain is ATP synthase subunit delta, found in Haemophilus influenzae (strain PittEE).